The following is a 393-amino-acid chain: tRNA(Met) cytidine acetate ligase (393 aa).

ATP contacts are provided by G81, N142, and R167.

It belongs to the TmcAL family.

The protein localises to the cytoplasm. It carries out the reaction cytidine(34) in elongator tRNA(Met) + acetate + ATP = N(4)-acetylcytidine(34) in elongator tRNA(Met) + AMP + diphosphate. In terms of biological role, catalyzes the formation of N(4)-acetylcytidine (ac(4)C) at the wobble position of elongator tRNA(Met), using acetate and ATP as substrates. First activates an acetate ion to form acetyladenylate (Ac-AMP) and then transfers the acetyl group to tRNA to form ac(4)C34. The chain is tRNA(Met) cytidine acetate ligase from Bacillus anthracis (strain A0248).